Reading from the N-terminus, the 366-residue chain is MKIADLMTLLDHHVPFRTAESWDNVGLLIGDEDVEVTGVLTALDCTLEVVNEAIEKGYNTIISHHPLIFKGVTSLKANGYGLIIRKLIQHDINLIAMHTNLDVNPHGVNMMLAKAMGLKNISIINNQQDVYYKVQTYIPKDNVGPFKDKLSENGLAQEGNYEYCFFESEGRGQFKPVGEANPTIGQIDKIEYVDEVKIEFMIDACQKSWAEQLIKQYHPYETPVFDFIEIKQTSLYGLGVMAEVDNQMTLEDFAANIKSKLNIPSVRFVGESNQKIKRIAIIGGSGIGYEYQAVQQGADVFVTGDIKHHDALDAKIHGVNLIDINHYSEYVMKEGLKTLLMNWFNTEKINIDVEASTINTDPFEYI.

Residues His-64, His-65, Asp-102, His-326, and Glu-329 each coordinate Zn(2+).

The protein belongs to the GTP cyclohydrolase I type 2/NIF3 family. As to quaternary structure, homohexamer.

This Staphylococcus aureus (strain MRSA252) protein is GTP cyclohydrolase 1 type 2 homolog.